The primary structure comprises 233 residues: uncharacterized protein (233 aa).

Belongs to the asfivirus H233R family.

This is an uncharacterized protein from African swine fever virus (isolate Tick/Malawi/Lil 20-1/1983) (ASFV).